Here is a 300-residue protein sequence, read N- to C-terminus: 33 kDa chaperonin (300 aa).

2 disulfide bridges follow: C235/C237 and C269/C272.

It belongs to the HSP33 family. In terms of processing, under oxidizing conditions two disulfide bonds are formed involving the reactive cysteines. Under reducing conditions zinc is bound to the reactive cysteines and the protein is inactive.

The protein localises to the cytoplasm. Its function is as follows. Redox regulated molecular chaperone. Protects both thermally unfolding and oxidatively damaged proteins from irreversible aggregation. Plays an important role in the bacterial defense system toward oxidative stress. This is 33 kDa chaperonin from Pseudomonas savastanoi pv. phaseolicola (strain 1448A / Race 6) (Pseudomonas syringae pv. phaseolicola (strain 1448A / Race 6)).